The following is a 1638-amino-acid chain: DNA polymerase III PolC-type (1638 aa).

The segment at 193 to 212 (SEIKKQRSEERESKNTREAK) is disordered. Residues 194-212 (EIKKQRSEERESKNTREAK) show a composition bias toward basic and acidic residues. One can recognise an Exonuclease domain in the interval 596-752 (YVVFDVETTG…FDAEATGRLL (157 aa)).

The protein belongs to the DNA polymerase type-C family. PolC subfamily.

The protein resides in the cytoplasm. It carries out the reaction DNA(n) + a 2'-deoxyribonucleoside 5'-triphosphate = DNA(n+1) + diphosphate. Its function is as follows. Required for replicative DNA synthesis. This DNA polymerase also exhibits 3' to 5' exonuclease activity. This Lactococcus lactis subsp. lactis (strain IL1403) (Streptococcus lactis) protein is DNA polymerase III PolC-type.